A 166-amino-acid chain; its full sequence is Putative 4-hydroxy-4-methyl-2-oxoglutarate aldolase (166 aa).

Residues 74–77 (GDQI) and arginine 96 contribute to the substrate site. Aspartate 97 serves as a coordination point for a divalent metal cation.

It belongs to the class II aldolase/RraA-like family. In terms of assembly, homotrimer. A divalent metal cation is required as a cofactor.

The catalysed reaction is 4-hydroxy-4-methyl-2-oxoglutarate = 2 pyruvate. It catalyses the reaction oxaloacetate + H(+) = pyruvate + CO2. Catalyzes the aldol cleavage of 4-hydroxy-4-methyl-2-oxoglutarate (HMG) into 2 molecules of pyruvate. Also contains a secondary oxaloacetate (OAA) decarboxylase activity due to the common pyruvate enolate transition state formed following C-C bond cleavage in the retro-aldol and decarboxylation reactions. This chain is Putative 4-hydroxy-4-methyl-2-oxoglutarate aldolase, found in Xanthomonas campestris pv. campestris (strain B100).